Here is a 163-residue protein sequence, read N- to C-terminus: 3-dehydroquinate dehydratase (163 aa).

Y28 serves as the catalytic Proton acceptor. Residues N80, H86, and D93 each coordinate substrate. The active-site Proton donor is the H106. Substrate contacts are provided by residues I107–S108 and R117.

It belongs to the type-II 3-dehydroquinase family. In terms of assembly, homododecamer.

It catalyses the reaction 3-dehydroquinate = 3-dehydroshikimate + H2O. It functions in the pathway metabolic intermediate biosynthesis; chorismate biosynthesis; chorismate from D-erythrose 4-phosphate and phosphoenolpyruvate: step 3/7. In terms of biological role, catalyzes a trans-dehydration via an enolate intermediate. The protein is 3-dehydroquinate dehydratase of Bradyrhizobium sp. (strain BTAi1 / ATCC BAA-1182).